Consider the following 179-residue polypeptide: Large ribosomal subunit protein uL5 (179 aa).

This sequence belongs to the universal ribosomal protein uL5 family. As to quaternary structure, part of the 50S ribosomal subunit; part of the 5S rRNA/L5/L18/L25 subcomplex. Contacts the 5S rRNA and the P site tRNA. Forms a bridge to the 30S subunit in the 70S ribosome.

Its function is as follows. This is one of the proteins that bind and probably mediate the attachment of the 5S RNA into the large ribosomal subunit, where it forms part of the central protuberance. In the 70S ribosome it contacts protein S13 of the 30S subunit (bridge B1b), connecting the 2 subunits; this bridge is implicated in subunit movement. Contacts the P site tRNA; the 5S rRNA and some of its associated proteins might help stabilize positioning of ribosome-bound tRNAs. This Salmonella arizonae (strain ATCC BAA-731 / CDC346-86 / RSK2980) protein is Large ribosomal subunit protein uL5.